A 605-amino-acid polypeptide reads, in one-letter code: Elongation factor 4 (605 aa).

The tr-type G domain maps to 9-192; it reads NRIRNFCIIA…AIVQRIPAPA (184 aa). GTP contacts are provided by residues 21 to 26 and 139 to 142; these read DHGKST and NKID.

This sequence belongs to the TRAFAC class translation factor GTPase superfamily. Classic translation factor GTPase family. LepA subfamily.

Its subcellular location is the cell inner membrane. It catalyses the reaction GTP + H2O = GDP + phosphate + H(+). Required for accurate and efficient protein synthesis under certain stress conditions. May act as a fidelity factor of the translation reaction, by catalyzing a one-codon backward translocation of tRNAs on improperly translocated ribosomes. Back-translocation proceeds from a post-translocation (POST) complex to a pre-translocation (PRE) complex, thus giving elongation factor G a second chance to translocate the tRNAs correctly. Binds to ribosomes in a GTP-dependent manner. In Pelodictyon phaeoclathratiforme (strain DSM 5477 / BU-1), this protein is Elongation factor 4.